A 579-amino-acid polypeptide reads, in one-letter code: MKVVPSEKIKPNWWRETSVYQIYPASFKDSNGDGFGDLEGIISKVDYLKALNVESIWLCPIYPSPLKDMGYDVSDYKQIDSRYGTLEDLDRLMKALHERDMKLVMDLVLNHTSDQHEWFKESRSSKTNPKRDWYFWKPARYNEKGERLPPNNWRSYFDTSAWEWDEATQEYYLHLWSVGQPDLNWETPKVREAVHDILRFWLDRGVDGFRLDAINMISKDQRFLDAPITDDRYEYQLAYQYYANGPRIHEYLNGIGNILTEYDAFSVGEMPYVLDTNEILHVVGADRRELTMIFQFDFVDLDLDPNQHKYIEGSWELSDLKKSLKKWQSALLSGGGWNASFIENHDQTRTVSRYLSDSPKYRAYSSKLMALFIIFQSGTPFVFQGQELALANIPRDWPIDEYLDVETQNFWKLFMSGNPSQEEIEKTMDIVNKRARDNGRTPMHWDSSPNGGFTKAGVKPWMRVTNDYKEWNAANQVNDPESPYTFWSKALELRKELKDAVVYGSFELISEEDPSIVAFVRESSTYKLIILLNFTGNKVSYDCPLNLTSYEILLDNYKDFICMTSPVTLNPYQAVLLKL.

Aspartate 212 serves as the catalytic Nucleophile. The Proton donor role is filled by glutamate 269.

It belongs to the glycosyl hydrolase 13 family.

The catalysed reaction is Hydrolysis of terminal, non-reducing (1-&gt;4)-linked alpha-D-glucose residues with release of alpha-D-glucose.. The chain is Alpha-glucosidase (mal1) from Schizosaccharomyces pombe (strain 972 / ATCC 24843) (Fission yeast).